Here is a 905-residue protein sequence, read N- to C-terminus: MTNQIPSASSAADFGSSKSTSVDAVPNMDKSSSVRRKNIDSNGLQQTNQIEQAESSLNAEADHSEPERYGCTPSGKVFLLPKEQENRRSILETVDPRFSKTPWDWIVISSILAQVLLFFMTTGAVRRYSMMLCFFFWRISYDAGIGFLLHMQSNHRKVVTWISDFGFFDKENHPKLYDLTKKQLISKMDSSYNYDTSPLEFNSWLVFRHFVDLILMCDFCSYILMGLAWTCWPKVNIILQFLRIFGGIALIVFNYWVKMDAHRVVRDYAWYWGDFFFLLRSSLVFNGVFELAPHPMYSVGYAGYYGMSLLTGSYAVLFASILAHAAQFGFLLFVENPHIERTYGTDINHARLSPRGEDNEFELPPEHDLVGFVNFDFTRISDVALLIIALYSIFIILLSSNSHYSQFWAIFQAFVWRFLHSIIHAFILFYQSKSKAWTKHFIRNGESAAYAWSQWKGLYNLTLNMSYISFVMAAWKLYHLPSNWTYGLVSLRHALGFGLIALHIYTSVSIYEDLGQYGWFYGDFFLPSRSPKLVYQGIYRYVNNPERFLGCSAYWGLALISSSAWIFLIAILAQLSNLAIIRLVEQPHMQKVYGNTLRKEAGISKLIKQATSEKGNILPKTVETHMKALTTSVDKVLDQTAEALEEFVNTAPPKVQELLKGTESNLRKNAQLAILKLFAPQLSSSTHFDYKLEIKGIDNNQVLLGHPITVCWTASPNHEINDWIGLYKLSDNASDLYTQTSSEGRWSAIDANGYTSHCSSIKSLSNDKNSGEVEFSGDLLFWETGTFEFRYHYGGKHLVMAKTEPFVITATSMNTTDVDEVSAYLLKSIKFCDPNITPHDGDASLCDISEGSARKLTSIIKYSFGIDLSYRVVQVDGSCSALSRRIVNSLKILQSFDGPSGAKDD.

Polar residues-rich tracts occupy residues 1–22 and 40–58; these read MTNQIPSASSAADFGSSKSTSV and DSNGLQQTNQIEQAESSLN. Positions 1–73 are disordered; the sequence is MTNQIPSASS…SEPERYGCTP (73 aa). The Lumenal portion of the chain corresponds to 1–104; that stretch reads MTNQIPSASS…DPRFSKTPWD (104 aa). A helical transmembrane segment spans residues 105-125; it reads WIVISSILAQVLLFFMTTGAV. The Cytoplasmic segment spans residues 126-128; that stretch reads RRY. Residues 129-149 form a helical membrane-spanning segment; the sequence is SMMLCFFFWRISYDAGIGFLL. Residues 150-209 are Lumenal-facing; sequence HMQSNHRKVVTWISDFGFFDKENHPKLYDLTKKQLISKMDSSYNYDTSPLEFNSWLVFRH. Residues 210–230 form a helical membrane-spanning segment; sequence FVDLILMCDFCSYILMGLAWT. The Cytoplasmic portion of the chain corresponds to 231–236; the sequence is CWPKVN. A helical transmembrane segment spans residues 237-257; the sequence is IILQFLRIFGGIALIVFNYWV. Topologically, residues 258–268 are lumenal; the sequence is KMDAHRVVRDY. The chain crosses the membrane as a helical span at residues 269–289; it reads AWYWGDFFFLLRSSLVFNGVF. The Cytoplasmic portion of the chain corresponds to 290–313; that stretch reads ELAPHPMYSVGYAGYYGMSLLTGS. Residues 314–334 traverse the membrane as a helical segment; the sequence is YAVLFASILAHAAQFGFLLFV. Residues 335 to 379 lie on the Lumenal side of the membrane; it reads ENPHIERTYGTDINHARLSPRGEDNEFELPPEHDLVGFVNFDFTR. At serine 353 the chain carries Phosphoserine. Residues 380–400 form a helical membrane-spanning segment; it reads ISDVALLIIALYSIFIILLSS. The Cytoplasmic segment spans residues 401–408; the sequence is NSHYSQFW. The helical transmembrane segment at 409–429 threads the bilayer; sequence AIFQAFVWRFLHSIIHAFILF. The Lumenal portion of the chain corresponds to 430 to 456; it reads YQSKSKAWTKHFIRNGESAAYAWSQWK. Residues 457 to 479 form a helical membrane-spanning segment; that stretch reads GLYNLTLNMSYISFVMAAWKLYH. Over 480 to 493 the chain is Cytoplasmic; that stretch reads LPSNWTYGLVSLRH. The chain crosses the membrane as a helical span at residues 494–514; the sequence is ALGFGLIALHIYTSVSIYEDL. Residues 515–552 lie on the Lumenal side of the membrane; the sequence is GQYGWFYGDFFLPSRSPKLVYQGIYRYVNNPERFLGCS. The chain crosses the membrane as a helical span at residues 553 to 573; it reads AYWGLALISSSAWIFLIAILA. Topologically, residues 574 to 905 are cytoplasmic; that stretch reads QLSNLAIIRL…FDGPSGAKDD (332 aa).

Belongs to the class VI-like SAM-binding methyltransferase superfamily. CHO2 family.

It localises to the endoplasmic reticulum membrane. It carries out the reaction a 1,2-diacyl-sn-glycero-3-phosphoethanolamine + S-adenosyl-L-methionine = a 1,2-diacyl-sn-glycero-3-phospho-N-methylethanolamine + S-adenosyl-L-homocysteine + H(+). It functions in the pathway phospholipid metabolism; phosphatidylcholine biosynthesis. Functionally, catalyzes the first step of the methylation pathway of phosphatidylcholine biosynthesis, the SAM-dependent methylation of phosphatidylethanolamine (PE) to phosphatidylmonomethylethanolamine (PMME). The chain is Phosphatidylethanolamine N-methyltransferase from Schizosaccharomyces pombe (strain 972 / ATCC 24843) (Fission yeast).